Reading from the N-terminus, the 37-residue chain is Non-specific lipid-transfer protein P4 (37 aa).

The protein belongs to the plant LTP family.

Its subcellular location is the secreted. Its function is as follows. Plant non-specific lipid-transfer proteins transfer phospholipids as well as galactolipids across membranes. May play a role in wax or cutin deposition in the cell walls of expanding epidermal cells and certain secretory tissues. The sequence is that of Non-specific lipid-transfer protein P4 from Vitis sp. (Grape).